Here is a 230-residue protein sequence, read N- to C-terminus: Fibrillarin-like rRNA/tRNA 2'-O-methyltransferase (230 aa).

S-adenosyl-L-methionine contacts are provided by residues 87 to 88 (TT), 105 to 106 (EF), 130 to 131 (DA), and 150 to 153 (DVAQ).

Belongs to the methyltransferase superfamily. Fibrillarin family. In terms of assembly, interacts with nop5. Component of box C/D small ribonucleoprotein (sRNP) particles that contain rpl7ae, FlpA and nop5, plus a guide RNA.

Its function is as follows. Involved in pre-rRNA and tRNA processing. Utilizes the methyl donor S-adenosyl-L-methionine to catalyze the site-specific 2'-hydroxyl methylation of ribose moieties in rRNA and tRNA. Site specificity is provided by a guide RNA that base pairs with the substrate. Methylation occurs at a characteristic distance from the sequence involved in base pairing with the guide RNA. In Methanococcus maripaludis (strain DSM 14266 / JCM 13030 / NBRC 101832 / S2 / LL), this protein is Fibrillarin-like rRNA/tRNA 2'-O-methyltransferase.